A 487-amino-acid polypeptide reads, in one-letter code: Protein nucleotidyltransferase YdiU (487 aa).

7 residues coordinate ATP: G92, R95, K106, D118, G119, R169, and R176. D253 (proton acceptor) is an active-site residue. Positions 254 and 263 each coordinate Mg(2+). D263 serves as a coordination point for ATP.

This sequence belongs to the SELO family. It depends on Mg(2+) as a cofactor. Mn(2+) is required as a cofactor.

The catalysed reaction is L-seryl-[protein] + ATP = 3-O-(5'-adenylyl)-L-seryl-[protein] + diphosphate. The enzyme catalyses L-threonyl-[protein] + ATP = 3-O-(5'-adenylyl)-L-threonyl-[protein] + diphosphate. It carries out the reaction L-tyrosyl-[protein] + ATP = O-(5'-adenylyl)-L-tyrosyl-[protein] + diphosphate. It catalyses the reaction L-histidyl-[protein] + UTP = N(tele)-(5'-uridylyl)-L-histidyl-[protein] + diphosphate. The catalysed reaction is L-seryl-[protein] + UTP = O-(5'-uridylyl)-L-seryl-[protein] + diphosphate. The enzyme catalyses L-tyrosyl-[protein] + UTP = O-(5'-uridylyl)-L-tyrosyl-[protein] + diphosphate. Functionally, nucleotidyltransferase involved in the post-translational modification of proteins. It can catalyze the addition of adenosine monophosphate (AMP) or uridine monophosphate (UMP) to a protein, resulting in modifications known as AMPylation and UMPylation. This is Protein nucleotidyltransferase YdiU from Bordetella pertussis (strain Tohama I / ATCC BAA-589 / NCTC 13251).